A 254-amino-acid polypeptide reads, in one-letter code: Photosystem II 22 kDa protein 2, chloroplastic (254 aa).

The transit peptide at 1-38 (MALQQSMAMPMMVVSDLGTAPRSSPMVQLQRMKKHLVV) directs the protein to the chloroplast. Tandem repeats lie at residues 42-148 (FKSR…FVDD) and 149-253 (ATGL…DNDD). 4 helical membrane passes run 86–106 (VAML…KGIL), 120–140 (AEPL…GALG), 184–204 (LFVG…EIIT), and 219–239 (PINE…FAAI).

Belongs to the ELIP/psbS family.

It is found in the plastid. Its subcellular location is the chloroplast thylakoid membrane. Functionally, involved in high light-mediated energy-dependent nonphotochemical quenching (NPQ, qE) and thermal dissipation (TD) thus regulating energy conversion in photosystem II and protecting from photoinhibition. Also seems to regulate quantum yield of electron transport in fluctuating light conditions. The polypeptide is Photosystem II 22 kDa protein 2, chloroplastic (Oryza sativa subsp. japonica (Rice)).